The following is a 481-amino-acid chain: WD repeat-containing protein 55 homolog (481 aa).

Positions 1–116 (MHTHNHFKTP…NRDVETNFDL (116 aa)) are disordered. 3 stretches are compositionally biased toward acidic residues: residues 12-23 (DAEEVDDLDDEM), 31-46 (IEQE…DDGF), and 68-81 (DSFD…DSDD). 6 WD repeats span residues 144–183 (KLED…NKLI), 188–227 (VHSK…LKKL), 231–269 (AHDD…HVFE), 272–311 (QIDD…LYVQ), 314–353 (PYEE…YHCD), and 398–437 (QHNM…DFGD).

It belongs to the WD repeat WDR55 family.

This Drosophila ananassae (Fruit fly) protein is WD repeat-containing protein 55 homolog.